The following is a 132-amino-acid chain: Fatty acid-binding protein, intestinal (132 aa).

Ala-2 bears the N-acetylalanine mark. Hexadecanoate contacts are provided by Trp-83 and Arg-107. 2 residues coordinate tetradecanoate: Trp-83 and Arg-107.

It belongs to the calycin superfamily. Fatty-acid binding protein (FABP) family. Expressed in the small intestine. Expression in the mucosal cells of the ileum extends from the midvillar region to the villus tips.

The protein localises to the cytoplasm. Functionally, FABPs are thought to play a role in the intracellular transport of long-chain fatty acids and their acyl-CoA esters. FABP2 is probably involved in triglyceride-rich lipoprotein synthesis. Binds saturated long-chain fatty acids with a high affinity, but binds with a lower affinity to unsaturated long-chain fatty acids. FABP2 may also help maintain energy homeostasis by functioning as a lipid sensor. This chain is Fatty acid-binding protein, intestinal (Fabp2), found in Rattus norvegicus (Rat).